Here is a 483-residue protein sequence, read N- to C-terminus: Altronate oxidoreductase (483 aa).

18–29 (IIQFGEGNFLRA) lines the NAD(+) pocket.

The protein belongs to the mannitol dehydrogenase family. UxaB subfamily.

It carries out the reaction D-altronate + NAD(+) = keto-D-tagaturonate + NADH + H(+). The protein operates within carbohydrate metabolism; pentose and glucuronate interconversion. This chain is Altronate oxidoreductase, found in Escherichia coli O17:K52:H18 (strain UMN026 / ExPEC).